The following is a 680-amino-acid chain: Outer dense fiber protein 2 (680 aa).

Residues Leu27–Asp46 form a disordered region. Ser68 and Ser69 each carry phosphoserine. A Phosphothreonine modification is found at Thr87. Ser90 is modified (phosphoserine; by TSSK4). Ser101 and Ser104 each carry phosphoserine. At Thr105 the chain carries Phosphothreonine. 2 positions are modified to phosphoserine: Ser110 and Ser124. Lys133 participates in a covalent cross-link: Glycyl lysine isopeptide (Lys-Gly) (interchain with G-Cter in SUMO2). Ser134 is modified (phosphoserine). Residues Gln139–Asp212 adopt a coiled-coil conformation. A Phosphothreonine modification is found at Thr226. Ser256 is subject to Phosphoserine. Coiled-coil stretches lie at residues Lys275–Leu418 and Glu456–Arg630. Residues Lys387 to Lys410 form a disordered region. The residue at position 627 (Ser627) is a Phosphoserine. The interval Arg632 to His680 is disordered.

It belongs to the ODF2 family. In terms of assembly, self-associates. Associates with microtubules and forms a fibrillar structure partially linked to the microtubule network. Interacts via its C-terminus with PLK1. Interacts with ODF1. Interacts with MARK4; the interaction is required for localization of ODF2 to centrioles. Interacts with TSSK4. Interacts with AKNA. Interacts with QRICH2. Interacts with CFAP58. Interacts with BBOF1. Interacts with CCDC38. Interacts with CCDC42. Tyrosine phosphorylated. Phosphorylated on Ser-90 by TSSK4.

The protein resides in the cytoplasm. Its subcellular location is the cytoskeleton. It is found in the microtubule organizing center. It localises to the centrosome. The protein localises to the cell projection. The protein resides in the cilium. Its subcellular location is the centriole. It is found in the spindle pole. It localises to the flagellum. In terms of biological role, seems to be a major component of sperm tail outer dense fibers (ODF). ODFs are filamentous structures located on the outside of the axoneme in the midpiece and principal piece of the mammalian sperm tail and may help to maintain the passive elastic structures and elastic recoil of the sperm tail. May have a modulating influence on sperm motility. Functions as a general scaffold protein that is specifically localized at the distal/subdistal appendages of mother centrioles. Component of the centrosome matrix required for the localization of PLK1 and NIN to the centrosomes. Required for the formation and/or maintenance of normal CETN1 assembly. This Pongo abelii (Sumatran orangutan) protein is Outer dense fiber protein 2 (ODF2).